A 702-amino-acid polypeptide reads, in one-letter code: Transposon Tn7 transposition protein TnsB (702 aa).

A DNA-binding domain 1 (DBD1) region spans residues 1–139 (MWQINEVVLF…GQTPNALIPD (139 aa)). A DNA-binding region (H-T-H motif) is located at residues 105–124 (VEHVVQEHKVTKATVYKLLR). A disordered region spans residues 137–160 (IPDYKNSGAPGERRSATGTAKIGR). The segment at 140 to 172 (YKNSGAPGERRSATGTAKIGRAREYGKGEGTKV) is linker 1. Positions 173-233 (TPEIERLFRL…QFRYFYDREY (61 aa)) are DNA-binding domain 2 (DBD2). The linker 2 stretch occupies residues 234–267 (PKAQRLKSRVKAGVYKKDVRPLSSTATSQALGPG). One can recognise an Integrase catalytic domain in the interval 262 to 480 (QALGPGSRYE…IPVQLWQWGM (219 aa)). Residues 268-582 (SRYEIDATIA…RSRQFKGLSF (315 aa)) are catalytic domain (CD). The interval 589 to 702 (QAQEKHNKAN…FQDPPEKDES (114 aa)) is C-terminal domain. The disordered stretch occupies residues 623–702 (KLTPSTTEPK…FQDPPEKDES (80 aa)).

In terms of assembly, heteromer with TnsA.

Its function is as follows. Sequence-specific, DNA-binding protein required for Tn7 transposition. Recognizes sequences necessary for recombination at both left and right ends of Tn7 and, together with TnsA, forms the transposase. TnsB executes the 3'-DNA strand breakage and joining reactions. TnsB binding introduces DNA bending. There are 3 DNA-binding sites in the left and 4 in the right end of Tn7; as TnsB levels increase more TnsB is bound, suggesting high protein levels contribute to transposon immunity. Binding of TnsB to the transposon right end represses expression of the downstream transposition genes. TnsABC + TnsD promote high-frequency insertion of Tn7 into a specific target site known as att-Tn7 whereas TnsABC + TnsE promote low-frequency insertion into many different sites. In Escherichia coli, this protein is Transposon Tn7 transposition protein TnsB.